Here is a 273-residue protein sequence, read N- to C-terminus: NH(3)-dependent NAD(+) synthetase (273 aa).

Residue 46–53 (GISGGQDS) coordinates ATP. Aspartate 52 is a Mg(2+) binding site. Arginine 139 lines the deamido-NAD(+) pocket. Threonine 159 is a binding site for ATP. Glutamate 164 provides a ligand contact to Mg(2+). Lysine 172 and aspartate 179 together coordinate deamido-NAD(+). Positions 188 and 210 each coordinate ATP. Residue 259-260 (HK) participates in deamido-NAD(+) binding.

This sequence belongs to the NAD synthetase family. As to quaternary structure, homodimer.

The catalysed reaction is deamido-NAD(+) + NH4(+) + ATP = AMP + diphosphate + NAD(+) + H(+). The protein operates within cofactor biosynthesis; NAD(+) biosynthesis; NAD(+) from deamido-NAD(+) (ammonia route): step 1/1. In terms of biological role, catalyzes the ATP-dependent amidation of deamido-NAD to form NAD. Uses ammonia as a nitrogen source. The chain is NH(3)-dependent NAD(+) synthetase from Mycobacteroides abscessus (strain ATCC 19977 / DSM 44196 / CCUG 20993 / CIP 104536 / JCM 13569 / NCTC 13031 / TMC 1543 / L948) (Mycobacterium abscessus).